A 150-amino-acid chain; its full sequence is Large ribosomal subunit protein uL13 (150 aa).

It belongs to the universal ribosomal protein uL13 family. In terms of assembly, part of the 50S ribosomal subunit.

Its function is as follows. This protein is one of the early assembly proteins of the 50S ribosomal subunit, although it is not seen to bind rRNA by itself. It is important during the early stages of 50S assembly. The chain is Large ribosomal subunit protein uL13 from Sulfurihydrogenibium sp. (strain YO3AOP1).